We begin with the raw amino-acid sequence, 119 residues long: Parathyroid hormone (119 aa).

The N-terminal stretch at 1–25 is a signal peptide; sequence MTSTKNLAKAIVILYAICFFTNSDG. A propeptide spanning residues 26–31 is cleaved from the precursor; that stretch reads RPMMKR.

Belongs to the parathyroid hormone family. As to quaternary structure, interacts with PTH1R (via N-terminal extracellular domain).

It is found in the secreted. In terms of biological role, parathyroid hormone elevates calcium level by dissolving the salts in bone and preventing their renal excretion. Acts by binding to its receptor, PTH1R, activating G protein-coupled receptor signaling. Stimulates [1-14C]-2-deoxy-D-glucose (2DG) transport and glycogen synthesis in osteoblastic cells. The protein is Parathyroid hormone of Gallus gallus (Chicken).